The following is a 238-amino-acid chain: ATP synthase subunit a (238 aa).

5 consecutive transmembrane segments (helical) span residues Leu-17–Ala-37, Phe-75–Pro-95, Asp-112–Val-132, Ile-179–Ala-199, and Phe-202–Phe-222.

The protein belongs to the ATPase A chain family. In terms of assembly, F-type ATPases have 2 components, CF(1) - the catalytic core - and CF(0) - the membrane proton channel. CF(1) has five subunits: alpha(3), beta(3), gamma(1), delta(1), epsilon(1). CF(0) has three main subunits: a(1), b(2) and c(9-12). The alpha and beta chains form an alternating ring which encloses part of the gamma chain. CF(1) is attached to CF(0) by a central stalk formed by the gamma and epsilon chains, while a peripheral stalk is formed by the delta and b chains.

The protein localises to the cell membrane. Its function is as follows. Key component of the proton channel; it plays a direct role in the translocation of protons across the membrane. In Bacillus sp. (strain PS3), this protein is ATP synthase subunit a.